Consider the following 417-residue polypeptide: MSLSNKLTLDKLDVKGKRVVMRVDFNVPMKNNQITNNQRIKAAVPSIKFCLDNGAKSVVLMSHLGRPDGVPMPDKYSLEPVAAELKSLLGKDVLFLKDCVGSEVENACANPAAGTVILLENLRFHVEEEGKGKDASGNKVKAEPAKIDAFRASLSKLGDVYVNDAFGTAHRAHSSMVGVNLPQKAGGFLMKKELNYFAKALESPERPFLAILGGAKVADKIQLINNMLDKVNEMIIGGGMAFTFLKVLNNMEIGTSLYDEEGAKIVKDLMAKAEKNGVKITLPVDFVTADKFDENAKTGQATVASGIPAGWMGLDCGTESSKKYAEAVARAKQIVWNGPVGVFEWEAFARGTKSLMDEVVKATSRGCITIIGGGDTATCCAKWNTEDKVSHVSTGGGASLELLEGKVLPGVDALSNV.

The residue at position 2 (S2) is an N-acetylserine. Phosphoserine is present on residues S2 and S4. N6-succinyllysine is present on K6. K11 is subject to N6-acetyllysine. (2R)-3-phosphoglycerate is bound by residues V23, D24, F25, N26, Q38, and R39. The interval Q38–A43 is mitochondrial targeting region exposed following cis-trans isomerization by PIN1 and recognized by the TOM complex for mitochondrial translocation of the protein. K48 is subject to N6-acetyllysine; alternate. N6-succinyllysine; alternate is present on K48. 4 residues coordinate (2R)-3-phosphoglycerate: S62, H63, G65, and R66. The residue at position 75 (K75) is an N6-acetyllysine. Phosphotyrosine is present on Y76. 2 positions are modified to N6-acetyllysine: K86 and K91. At K97 the chain carries N6-acetyllysine; alternate. At K97 the chain carries N6-(2-hydroxyisobutyryl)lysine; alternate. Residues L122 and R123 each coordinate (2R)-3-phosphoglycerate. Position 131 is an N6-acetyllysine; alternate (K131). K131 is modified (N6-malonyllysine; alternate). K146 is subject to N6-acetyllysine. Positions 170 and 171 each coordinate (2R)-3-phosphoglycerate. An N6-succinyllysine modification is found at K191. At Y196 the chain carries Phosphotyrosine. Residue K199 is modified to N6-acetyllysine. The residue at position 203 (S203) is a Phosphoserine. Residue G214 participates in ADP binding. G214 is a CDP binding site. AMP contacts are provided by A215 and K216. A215 contacts ATP. A215 lines the Mg(2+) pocket. The residue at position 216 (K216) is an N6-(2-hydroxyisobutyryl)lysine. Residues A218 and D219 each coordinate Mg(2+). D219 serves as a coordination point for CDP. K220 is a binding site for AMP. Residue K220 coordinates ATP. N6-(2-hydroxyisobutyryl)lysine is present on K220. ADP is bound at residue G238. G238 contacts CDP. G239 serves as a coordination point for AMP. Residue G239 coordinates ATP. Residues K267 and K291 each carry the N6-acetyllysine modification. G313 provides a ligand contact to AMP. G313 is a binding site for ATP. The residue at position 323 (K323) is an N6-(2-hydroxyisobutyryl)lysine. Residues G338, V340, and F343 each contribute to the CDP site. F343 contributes to the ADP binding site. E344 provides a ligand contact to AMP. E344 lines the ATP pocket. S354 bears the Phosphoserine mark. K361 is modified (N6-acetyllysine). Residues D375 and T376 each contribute to the ATP site. D375 is a Mg(2+) binding site.

Belongs to the phosphoglycerate kinase family. Monomer. Interacts with kinase MAPK1/ERK2; the interaction is direct, occurs under hypoxic conditions, and promotes its interaction with PIN1. Interacts with peptidyl-prolyl cis-trans isomerase PIN1; the interaction is direct, occurs under hypoxic conditions, and targets the protein to the mitochondrion by promoting interactions with the TOM complex. Interacts with mitochondrial circRNA mcPGK1 (via its 2nd stem-loop); the interaction is direct and targets the protein to the mitochondrion by promoting interactions with the TOM complex. Interacts with pyruvate dehydrogenase kinase PDK1; the interaction is direct, occurs under hypoxic conditions and leads to PDK1-mediated inhibition of pyruvate dehydrogenase complex activity. The cofactor is Mg(2+). Phosphorylated at Ser-203 by MAPK1/ERK2 under hypoxic conditions, which promotes its mitochondrial targeting.

It localises to the cytoplasm. It is found in the cytosol. The protein localises to the mitochondrion matrix. It catalyses the reaction (2R)-3-phosphoglycerate + ATP = (2R)-3-phospho-glyceroyl phosphate + ADP. The enzyme catalyses L-seryl-[protein] + ATP = O-phospho-L-seryl-[protein] + ADP + H(+). It functions in the pathway carbohydrate degradation; glycolysis; pyruvate from D-glyceraldehyde 3-phosphate: step 2/5. Functionally, catalyzes one of the two ATP producing reactions in the glycolytic pathway via the reversible conversion of 1,3-diphosphoglycerate to 3-phosphoglycerate. Both L- and D- forms of purine and pyrimidine nucleotides can be used as substrates, but the activity is much lower on pyrimidines. In addition to its role as a glycolytic enzyme, it seems that PGK-1 acts as a polymerase alpha cofactor protein (primer recognition protein). Acts as a protein kinase when localized to the mitochondrion where it phosphorylates pyruvate dehydrogenase kinase PDK1 to inhibit pyruvate dehydrogenase complex activity and suppress the formation of acetyl-coenzyme A from pyruvate, and consequently inhibit oxidative phosphorylation and promote glycolysis. May play a role in sperm motility. The sequence is that of Phosphoglycerate kinase 1 (Pgk1) from Rattus norvegicus (Rat).